We begin with the raw amino-acid sequence, 96 residues long: Nucleoid-associated protein CCA_00330 (96 aa).

This sequence belongs to the YbaB/EbfC family. As to quaternary structure, homodimer.

It is found in the cytoplasm. The protein localises to the nucleoid. Binds to DNA and alters its conformation. May be involved in regulation of gene expression, nucleoid organization and DNA protection. This chain is Nucleoid-associated protein CCA_00330, found in Chlamydia caviae (strain ATCC VR-813 / DSM 19441 / 03DC25 / GPIC) (Chlamydophila caviae).